Consider the following 152-residue polypeptide: CMT1A duplicated region transcript 4 protein (152 aa).

The span at 1–11 shows a compositional bias: basic and acidic residues; that stretch reads MDARRMKKEEG. Disordered stretches follow at residues 1–23 and 60–89; these read MDAR…RKLL and ERPW…GKAV. Over residues 65–74 the composition is skewed to polar residues; sequence SRQNKPSSVI.

In terms of tissue distribution, expressed in fetal skeletal muscle and kidney.

The polypeptide is CMT1A duplicated region transcript 4 protein (CDRT4) (Homo sapiens (Human)).